Here is a 171-residue protein sequence, read N- to C-terminus: Crossover junction endodeoxyribonuclease RuvC (171 aa).

Residues Asp7, Glu66, and Asp138 contribute to the active site. Mg(2+)-binding residues include Asp7, Glu66, and Asp138.

Belongs to the RuvC family. As to quaternary structure, homodimer which binds Holliday junction (HJ) DNA. The HJ becomes 2-fold symmetrical on binding to RuvC with unstacked arms; it has a different conformation from HJ DNA in complex with RuvA. In the full resolvosome a probable DNA-RuvA(4)-RuvB(12)-RuvC(2) complex forms which resolves the HJ. Mg(2+) serves as cofactor.

The protein localises to the cytoplasm. The catalysed reaction is Endonucleolytic cleavage at a junction such as a reciprocal single-stranded crossover between two homologous DNA duplexes (Holliday junction).. The RuvA-RuvB-RuvC complex processes Holliday junction (HJ) DNA during genetic recombination and DNA repair. Endonuclease that resolves HJ intermediates. Cleaves cruciform DNA by making single-stranded nicks across the HJ at symmetrical positions within the homologous arms, yielding a 5'-phosphate and a 3'-hydroxyl group; requires a central core of homology in the junction. The consensus cleavage sequence is 5'-(A/T)TT(C/G)-3'. Cleavage occurs on the 3'-side of the TT dinucleotide at the point of strand exchange. HJ branch migration catalyzed by RuvA-RuvB allows RuvC to scan DNA until it finds its consensus sequence, where it cleaves and resolves the cruciform DNA. This Thiobacillus denitrificans (strain ATCC 25259 / T1) protein is Crossover junction endodeoxyribonuclease RuvC.